A 641-amino-acid chain; its full sequence is SH2 domain-containing protein A (641 aa).

Positions 355 to 384 (VNGNGTSMEWRPQNHEEDNSSTDSENTEMR) are disordered. The region spanning 547-641 (WIEGFVTKEE…SRLGRIIRGI (95 aa)) is the SH2 domain.

Phosphorylated on tyrosine residues. As to expression, expressed in roots, leaves, stems and flowers.

This Arabidopsis thaliana (Mouse-ear cress) protein is SH2 domain-containing protein A.